Reading from the N-terminus, the 118-residue chain is Small ribosomal subunit protein uS13 (118 aa).

The disordered stretch occupies residues 93-118 (RNLPVRGQNTKNNARTRKGPTRPLKR). The segment covering 106–118 (ARTRKGPTRPLKR) has biased composition (basic residues).

The protein belongs to the universal ribosomal protein uS13 family. In terms of assembly, part of the 30S ribosomal subunit. Forms a loose heterodimer with protein S19. Forms two bridges to the 50S subunit in the 70S ribosome.

Its function is as follows. Located at the top of the head of the 30S subunit, it contacts several helices of the 16S rRNA. In the 70S ribosome it contacts the 23S rRNA (bridge B1a) and protein L5 of the 50S subunit (bridge B1b), connecting the 2 subunits; these bridges are implicated in subunit movement. Contacts the tRNAs in the A and P-sites. The chain is Small ribosomal subunit protein uS13 from Psychrobacter cryohalolentis (strain ATCC BAA-1226 / DSM 17306 / VKM B-2378 / K5).